A 197-amino-acid chain; its full sequence is Small ribosomal subunit protein uS4B (197 aa).

The region spanning 88-151 (CRLDNIAYRI…RKNDEFADNF (64 aa)) is the S4 RNA-binding domain.

Belongs to the universal ribosomal protein uS4 family. As to quaternary structure, part of the 30S ribosomal subunit. Contacts protein S5. The interaction surface between S4 and S5 is involved in control of translational fidelity.

One of the primary rRNA binding proteins, it binds directly to 16S rRNA where it nucleates assembly of the body of the 30S subunit. Functionally, with S5 and S12 plays an important role in translational accuracy. This chain is Small ribosomal subunit protein uS4B, found in Clostridium botulinum (strain Hall / ATCC 3502 / NCTC 13319 / Type A).